A 231-amino-acid chain; its full sequence is 2-C-methyl-D-erythritol 4-phosphate cytidylyltransferase (231 aa).

It belongs to the IspD/TarI cytidylyltransferase family. IspD subfamily.

The enzyme catalyses 2-C-methyl-D-erythritol 4-phosphate + CTP + H(+) = 4-CDP-2-C-methyl-D-erythritol + diphosphate. It participates in isoprenoid biosynthesis; isopentenyl diphosphate biosynthesis via DXP pathway; isopentenyl diphosphate from 1-deoxy-D-xylulose 5-phosphate: step 2/6. In terms of biological role, catalyzes the formation of 4-diphosphocytidyl-2-C-methyl-D-erythritol from CTP and 2-C-methyl-D-erythritol 4-phosphate (MEP). In Shewanella pealeana (strain ATCC 700345 / ANG-SQ1), this protein is 2-C-methyl-D-erythritol 4-phosphate cytidylyltransferase.